The chain runs to 232 residues: Early E1A protein (232 aa).

Residues 40–48 form an interaction with RB1 in competition with E2F1 region; the sequence is PTLHDLFDV. Positions 69 to 84 are enriched in low complexity; sequence TDSSASTEADSGFSPL. Residues 69–97 form a disordered region; it reads TDSSASTEADSGFSPLSTPPVSPIPPHPT. Positions 85-97 are enriched in pro residues; it reads STPPVSPIPPHPT. Residues 107 to 111 carry the LXCXE motif, interaction with host RB1 motif; the sequence is LLCLE. A zinc finger lies at 146-164; it reads CLRCAFYQEQDDNALCGLC. The disordered stretch occupies residues 175–232; the sequence is SAGAEEEDDEVIFVSAKPGGRKRSAATPCEPDGVSKRPCVPEPEQTEPLDLSLKPRPN. The PXDLS motif, CTBP-binding signature appears at 222–226; the sequence is PLDLS. The Nuclear localization signal signature appears at 228-232; it reads KPRPN.

This sequence belongs to the adenoviridae E1A protein family. As to quaternary structure, interacts with host UBE2I; this interaction interferes with polySUMOylation. Interacts with host RB1; this interaction induces the aberrant dissociation of RB1-E2F1 complex thereby disrupting the activity of RB1 and activating E2F1-regulated genes. Interacts with host ATF7; the interaction enhances ATF7-mediated viral transactivation activity which requires the zinc binding domains of both proteins. Isoform early E1A 32 kDa protein and isoform early E1A 26 kDa protein interact (via N-terminus) with CUL1 and E3 ubiquitin ligase RBX1; these interactions inhibit RBX1-CUL1-dependent elongation reaction of ubiquitin chains and attenuate ubiquitination of SCF(FBXW7) target proteins. Interacts (via PXLXP motif) with host ZMYND11/BS69 (via MYND-type zinc finger); this interaction inhibits E1A mediated transactivation. Interacts with host EP300; this interaction stimulates the acetylation of RB1 by recruiting EP300 and RB1 into a multimeric-protein complex. Interacts with host CTBP1 and CTBP2; this interaction seems to potentiate viral replication. Interacts with host DCAF7. Interacts with host DYRK1A. Interacts with host KPNA4; this interaction allows E1A import into the host nucleus. Interacts with host EP400; this interaction stabilizes MYC. Interacts with host TBP protein; this interaction probably disrupts the TBP-TATA complex.

It is found in the host nucleus. Plays a role in viral genome replication by driving entry of quiescent cells into the cell cycle. Stimulation of progression from G1 to S phase allows the virus to efficiently use the cellular DNA replicating machinery to achieve viral genome replication. E1A protein has both transforming and trans-activating activities. Induces the disassembly of the E2F1 transcription factor from RB1 by direct competition for the same binding site on RB1, with subsequent transcriptional activation of E2F1-regulated S-phase genes and of the E2 region of the adenoviral genome. Release of E2F1 leads to the ARF-mediated inhibition of MDM2 and causes TP53/p53 to accumulate because it is not targeted for degradation by MDM2-mediated ubiquitination anymore. This increase in TP53, in turn, would arrest the cell proliferation and direct its death but this effect is counteracted by the viral protein E1B-55K. Inactivation of the ability of RB1 to arrest the cell cycle is critical for cellular transformation, uncontrolled cellular growth and proliferation induced by viral infection. Interaction with RBX1 and CUL1 inhibits ubiquitination of the proteins targeted by SCF(FBXW7) ubiquitin ligase complex, and may be linked to unregulated host cell proliferation. The tumorigenesis-restraining activity of E1A may be related to the disruption of the host CtBP-CtIP complex through the CtBP binding motif. In Canine adenovirus serotype 2 (strain Toronto A 26-61) (CAdV-2), this protein is Early E1A protein.